Consider the following 425-residue polypeptide: Dihydroorotase (425 aa).

Positions 56 and 58 each coordinate Zn(2+). Substrate-binding positions include 58–60 and N90; that span reads HYR. Positions 148, 175, and 228 each coordinate Zn(2+). N274 serves as a coordination point for substrate. D301 contacts Zn(2+). Residue D301 is part of the active site. Substrate-binding positions include H305 and 319-320; that span reads FG.

The protein belongs to the metallo-dependent hydrolases superfamily. DHOase family. Class I DHOase subfamily. The cofactor is Zn(2+).

It catalyses the reaction (S)-dihydroorotate + H2O = N-carbamoyl-L-aspartate + H(+). The protein operates within pyrimidine metabolism; UMP biosynthesis via de novo pathway; (S)-dihydroorotate from bicarbonate: step 3/3. Functionally, catalyzes the reversible cyclization of carbamoyl aspartate to dihydroorotate. This chain is Dihydroorotase, found in Lactobacillus acidophilus (strain ATCC 700396 / NCK56 / N2 / NCFM).